A 346-amino-acid chain; its full sequence is Anthranilate phosphoribosyltransferase (346 aa).

5-phospho-alpha-D-ribose 1-diphosphate is bound by residues Gly81, 84–85 (GD), 91–94 (NVST), 109–117 (KHGNRSVSS), and Ser121. Gly81 contributes to the anthranilate binding site. Residue Ser93 participates in Mg(2+) binding. An anthranilate-binding site is contributed by Asn112. Arg167 serves as a coordination point for anthranilate. Asp226 and Glu227 together coordinate Mg(2+).

Belongs to the anthranilate phosphoribosyltransferase family. Homodimer. The cofactor is Mg(2+).

It carries out the reaction N-(5-phospho-beta-D-ribosyl)anthranilate + diphosphate = 5-phospho-alpha-D-ribose 1-diphosphate + anthranilate. The protein operates within amino-acid biosynthesis; L-tryptophan biosynthesis; L-tryptophan from chorismate: step 2/5. Its function is as follows. Catalyzes the transfer of the phosphoribosyl group of 5-phosphorylribose-1-pyrophosphate (PRPP) to anthranilate to yield N-(5'-phosphoribosyl)-anthranilate (PRA). This is Anthranilate phosphoribosyltransferase from Hahella chejuensis (strain KCTC 2396).